We begin with the raw amino-acid sequence, 463 residues long: tRNA dimethylallyltransferase 9 (463 aa).

An ATP-binding site is contributed by 57 to 64; the sequence is GPTGAGKS. Residue 59–64 participates in substrate binding; that stretch reads TGAGKS. Positions 82–85 are interaction with substrate tRNA; it reads DSVQ.

Belongs to the IPP transferase family. Mg(2+) serves as cofactor. Expressed ubiquitously, with highest expression in proliferating tissues.

Its subcellular location is the cytoplasm. It carries out the reaction adenosine(37) in tRNA + dimethylallyl diphosphate = N(6)-dimethylallyladenosine(37) in tRNA + diphosphate. In terms of biological role, catalyzes the transfer of a dimethylallyl group onto the adenine at position 37 in tRNAs that read codons beginning with uridine, leading to the formation of N6-(dimethylallyl)adenosine (i(6)A). Involved in the cis-type cytokinin biosynthesis. This chain is tRNA dimethylallyltransferase 9 (IPT9), found in Arabidopsis thaliana (Mouse-ear cress).